Here is a 712-residue protein sequence, read N- to C-terminus: MARQTPITRYRNIGISAHIDAGKTTTTERILFYTGVSHKIGEVHDGAATMDWMEQEQERGITITSAATTCFWSGMGNQFPQHRINVIDTPGHVDFTIEVERSMRVLDGACMVYCAVGGVQPQSETVWRQANKYKVPRLAFVNKMDRTGANFFRVVEQMKTRLGANPVPIVVPIGAEDTFTGVVDLIEMKAIIWDEASQGMKFEYGEIPADLVDTAQEWRTNMVEAAAEASEELMDKYLEEGDLSKEDIIAGLRARTLASEIQVMLCGSAFKNKGVQRMLDAVIEFLPSPTEVKAIEGILDDKDETKASREASDEAPFSALAFKIMNDKFVGNLTFVRVYSGVLKQGDAVYNPVKSKRERIGRIVQMHANERQDIDEIRAGDIAACVGLKDVTTGDTLCDEKNIITLERMEFPDPVIQLAVEPKTKADQEKMSIALGRLAKEDPSFRVHTDEESGQTIIAGMGELHLDIIVDRMKREFGVEANIGKPMVAYRETIKKTVEQEGKLVRQTGGKGKFGHVYVRLEPLDVEAAGKEYEFAEEVVGGVVPKEFFGAVDKGIQERMKNGVLAGYPVVGVKAVLFDGSYHDVDSDELSFKMAGSYAFRDGFMKADPVLLEPIMKVEVETPEDYMGDIMGDLNRRRGMVQGMDDLPGGTKAIKAEVPLAEMFGYATQMRSMSQGRATYSMEFAKYAETPRNVAEGIIAKFQAGGKKGDDE.

A tr-type G domain is found at threonine 8 to threonine 290. Residues alanine 17–threonine 24, aspartate 88–histidine 92, and asparagine 142–aspartate 145 contribute to the GTP site.

This sequence belongs to the TRAFAC class translation factor GTPase superfamily. Classic translation factor GTPase family. EF-G/EF-2 subfamily.

It localises to the cytoplasm. Its function is as follows. Catalyzes the GTP-dependent ribosomal translocation step during translation elongation. During this step, the ribosome changes from the pre-translocational (PRE) to the post-translocational (POST) state as the newly formed A-site-bound peptidyl-tRNA and P-site-bound deacylated tRNA move to the P and E sites, respectively. Catalyzes the coordinated movement of the two tRNA molecules, the mRNA and conformational changes in the ribosome. This is Elongation factor G from Acinetobacter baumannii (strain AB307-0294).